Here is a 378-residue protein sequence, read N- to C-terminus: Anhydro-N-acetylmuramic acid kinase (378 aa).

23–30 provides a ligand contact to ATP; that stretch reads GTSMDGAD.

This sequence belongs to the anhydro-N-acetylmuramic acid kinase family.

It catalyses the reaction 1,6-anhydro-N-acetyl-beta-muramate + ATP + H2O = N-acetyl-D-muramate 6-phosphate + ADP + H(+). Its pathway is amino-sugar metabolism; 1,6-anhydro-N-acetylmuramate degradation. The protein operates within cell wall biogenesis; peptidoglycan recycling. Its function is as follows. Catalyzes the specific phosphorylation of 1,6-anhydro-N-acetylmuramic acid (anhMurNAc) with the simultaneous cleavage of the 1,6-anhydro ring, generating MurNAc-6-P. Is required for the utilization of anhMurNAc either imported from the medium or derived from its own cell wall murein, and thus plays a role in cell wall recycling. The chain is Anhydro-N-acetylmuramic acid kinase from Bordetella bronchiseptica (strain ATCC BAA-588 / NCTC 13252 / RB50) (Alcaligenes bronchisepticus).